The following is a 383-amino-acid chain: MPDSIPANSVGLVTPQLMQFDEPLALACGRTLDSYQLMVETYGTLNASRTNALLICHALSGHHHAAGYHSMDERKPGWWDAYIGPGKPLDTNKFFIVSLNNIGGCHGSTGPVTPNPSTGQPWGGDFPTLRVRDWVHSQARLADALGIQKWAAVVGGSLGGMQAMRWSLEYPDRVGHCVVIASAMKLSAQNIAFNHAAREAILTDPDFHDGNFLSHSTVPKRGLSTARVIAHLTYLSDDGMGQKFGRELRSGSFEQGTEEPVEFQIESYLRYQADSFSKVFDANTYVLMTRALDYFDLAREYGDDPVEAFKQAQCKYMVISFTSDWRFSPERSREIVNALIRADRDVVYGELESDFGHDAFLIPNQPRYWDLLTSYMSQIEVAD.

An AB hydrolase-1 domain is found at 51–361; the sequence is NALLICHALS…ESDFGHDAFL (311 aa). S157 serves as the catalytic Nucleophile. R227 serves as a coordination point for substrate. Residues D324 and H357 contribute to the active site. Substrate is bound at residue D358.

This sequence belongs to the AB hydrolase superfamily. MetX family. As to quaternary structure, homodimer.

The protein localises to the cytoplasm. The enzyme catalyses L-homoserine + succinyl-CoA = O-succinyl-L-homoserine + CoA. The protein operates within amino-acid biosynthesis; L-methionine biosynthesis via de novo pathway; O-succinyl-L-homoserine from L-homoserine: step 1/1. Transfers a succinyl group from succinyl-CoA to L-homoserine, forming succinyl-L-homoserine. In Teredinibacter turnerae (strain ATCC 39867 / T7901), this protein is Homoserine O-succinyltransferase.